Consider the following 158-residue polypeptide: RNA pyrophosphohydrolase (158 aa).

The Nudix hydrolase domain maps to 6–149 (GYRLNVGIVL…KRHVYRKVMK (144 aa)). Residues 38–59 (GGINIGETPEQAMYRELFEEIG) carry the Nudix box motif.

The protein belongs to the Nudix hydrolase family. RppH subfamily. A divalent metal cation serves as cofactor.

Functionally, accelerates the degradation of transcripts by removing pyrophosphate from the 5'-end of triphosphorylated RNA, leading to a more labile monophosphorylated state that can stimulate subsequent ribonuclease cleavage. This chain is RNA pyrophosphohydrolase, found in Blochmanniella floridana.